We begin with the raw amino-acid sequence, 524 residues long: GMP synthase [glutamine-hydrolyzing] (524 aa).

The Glutamine amidotransferase type-1 domain occupies 9-207 (RILILDFGSQ…VIHICQCIPN (199 aa)). Cysteine 86 functions as the Nucleophile in the catalytic mechanism. Active-site residues include histidine 181 and glutamate 183. The 192-residue stretch at 208-399 (WTTKHIIEDS…LGLPADLIYR (192 aa)) folds into the GMPS ATP-PPase domain. 235 to 241 (SGGVDSA) serves as a coordination point for ATP.

As to quaternary structure, homodimer.

The catalysed reaction is XMP + L-glutamine + ATP + H2O = GMP + L-glutamate + AMP + diphosphate + 2 H(+). It functions in the pathway purine metabolism; GMP biosynthesis; GMP from XMP (L-Gln route): step 1/1. Functionally, catalyzes the synthesis of GMP from XMP. This chain is GMP synthase [glutamine-hydrolyzing], found in Coxiella burnetii (strain RSA 493 / Nine Mile phase I).